Consider the following 315-residue polypeptide: Cobalamin biosynthesis protein CobD (315 aa).

The next 5 membrane-spanning stretches (helical) occupy residues I48–I68, P77–L97, D150–Y170, V200–L220, and M295–I315.

The protein belongs to the CobD/CbiB family.

It localises to the cell membrane. Its pathway is cofactor biosynthesis; adenosylcobalamin biosynthesis. Its function is as follows. Converts cobyric acid to cobinamide by the addition of aminopropanol on the F carboxylic group. The polypeptide is Cobalamin biosynthesis protein CobD (Clostridium perfringens (strain 13 / Type A)).